A 175-amino-acid chain; its full sequence is MMTYIVFILSIIFVISFVGFSSKPSPIYGGLVLIISGAVGCGIVLSFGGSFLGLMVFLIYLGGMLVVFGYTTAMATEQYPEVWVSNKAVLGAFVMGLLSELLLACYILKDDEVDAVFEFNGMGDWVIYDTGDSGFFSEEAMGIAALYSYGTWLVIVTGWSLFIGVLVIMEVTRGN.

Transmembrane regions (helical) follow at residues 1–21 (MMTYIVFILSIIFVISFVGFS), 25–45 (SPIYGGLVLIISGAVGCGIVL), 47–67 (FGGSFLGLMVFLIYLGGMLVV), 88–108 (AVLGAFVMGLLSELLLACYIL), and 149–169 (YGTWLVIVTGWSLFIGVLVIM).

The protein belongs to the complex I subunit 6 family. Core subunit of respiratory chain NADH dehydrogenase (Complex I) which is composed of 45 different subunits.

It localises to the mitochondrion inner membrane. The enzyme catalyses a ubiquinone + NADH + 5 H(+)(in) = a ubiquinol + NAD(+) + 4 H(+)(out). Its function is as follows. Core subunit of the mitochondrial membrane respiratory chain NADH dehydrogenase (Complex I) which catalyzes electron transfer from NADH through the respiratory chain, using ubiquinone as an electron acceptor. Essential for the catalytic activity and assembly of complex I. In Halichoerus grypus (Gray seal), this protein is NADH-ubiquinone oxidoreductase chain 6 (MT-ND6).